The sequence spans 237 residues: Large ribosomal subunit protein uL3 (237 aa).

Disordered stretches follow at residues 133–155 (ASHGNSITHRSHGSTGQRQDPGK) and 213–237 (PENAPKPAGLRAGAKAEAAATEGGE). Over residues 135–150 (HGNSITHRSHGSTGQR) the composition is skewed to polar residues. Gln151 carries the post-translational modification N5-methylglutamine. Residues 220–237 (AGLRAGAKAEAAATEGGE) are compositionally biased toward low complexity.

This sequence belongs to the universal ribosomal protein uL3 family. In terms of assembly, part of the 50S ribosomal subunit. Forms a cluster with proteins L14 and L19. Post-translationally, methylated by PrmB.

One of the primary rRNA binding proteins, it binds directly near the 3'-end of the 23S rRNA, where it nucleates assembly of the 50S subunit. This is Large ribosomal subunit protein uL3 from Brucella abortus (strain S19).